A 557-amino-acid polypeptide reads, in one-letter code: Chaperonin GroEL 1 (557 aa).

Residues 29 to 32, Lys50, 86 to 90, Gly416, and Asp495 each bind ATP; these read TLGP and DGTTT.

This sequence belongs to the chaperonin (HSP60) family. Forms a cylinder of 14 subunits composed of two heptameric rings stacked back-to-back. Interacts with the co-chaperonin GroES.

It localises to the cytoplasm. The enzyme catalyses ATP + H2O + a folded polypeptide = ADP + phosphate + an unfolded polypeptide.. In terms of biological role, together with its co-chaperonin GroES, plays an essential role in assisting protein folding. The GroEL-GroES system forms a nano-cage that allows encapsulation of the non-native substrate proteins and provides a physical environment optimized to promote and accelerate protein folding. The sequence is that of Chaperonin GroEL 1 from Protochlamydia amoebophila (strain UWE25).